A 67-amino-acid chain; its full sequence is DNA-directed RNA polymerase subunit omega (67 aa).

Belongs to the RNA polymerase subunit omega family. As to quaternary structure, the RNAP catalytic core consists of 2 alpha, 1 beta, 1 beta' and 1 omega subunit. When a sigma factor is associated with the core the holoenzyme is formed, which can initiate transcription.

The enzyme catalyses RNA(n) + a ribonucleoside 5'-triphosphate = RNA(n+1) + diphosphate. Promotes RNA polymerase assembly. Latches the N- and C-terminal regions of the beta' subunit thereby facilitating its interaction with the beta and alpha subunits. The sequence is that of DNA-directed RNA polymerase subunit omega from Delftia acidovorans (strain DSM 14801 / SPH-1).